The primary structure comprises 114 residues: Large ribosomal subunit protein bL20 (114 aa).

The protein belongs to the bacterial ribosomal protein bL20 family.

Functionally, binds directly to 23S ribosomal RNA and is necessary for the in vitro assembly process of the 50S ribosomal subunit. It is not involved in the protein synthesizing functions of that subunit. The polypeptide is Large ribosomal subunit protein bL20 (Amoebophilus asiaticus (strain 5a2)).